The sequence spans 482 residues: Methylenetetrahydrofolate--tRNA-(uracil-5-)-methyltransferase TrmFO (482 aa).

11-16 (GAGLAG) serves as a coordination point for FAD.

The protein belongs to the MnmG family. TrmFO subfamily. FAD is required as a cofactor.

It localises to the cytoplasm. The enzyme catalyses uridine(54) in tRNA + (6R)-5,10-methylene-5,6,7,8-tetrahydrofolate + NADH + H(+) = 5-methyluridine(54) in tRNA + (6S)-5,6,7,8-tetrahydrofolate + NAD(+). It catalyses the reaction uridine(54) in tRNA + (6R)-5,10-methylene-5,6,7,8-tetrahydrofolate + NADPH + H(+) = 5-methyluridine(54) in tRNA + (6S)-5,6,7,8-tetrahydrofolate + NADP(+). Catalyzes the folate-dependent formation of 5-methyl-uridine at position 54 (M-5-U54) in all tRNAs. This chain is Methylenetetrahydrofolate--tRNA-(uracil-5-)-methyltransferase TrmFO, found in Nitratidesulfovibrio vulgaris (strain DP4) (Desulfovibrio vulgaris).